Here is a 145-residue protein sequence, read N- to C-terminus: Ribosome maturation factor RimP (145 aa).

This sequence belongs to the RimP family.

It is found in the cytoplasm. Required for maturation of 30S ribosomal subunits. This chain is Ribosome maturation factor RimP, found in Borreliella burgdorferi (strain ATCC 35210 / DSM 4680 / CIP 102532 / B31) (Borrelia burgdorferi).